The sequence spans 502 residues: Cytochrome P450 monooxygenase verC (502 aa).

A helical membrane pass occupies residues isoleucine 9–glycine 29. 4 N-linked (GlcNAc...) asparagine glycosylation sites follow: asparagine 124, asparagine 190, asparagine 271, and asparagine 342. Residue cysteine 444 participates in heme binding.

It belongs to the cytochrome P450 family. Heme serves as cofactor.

The protein resides in the membrane. Its pathway is mycotoxin biosynthesis. Its function is as follows. Cytochrome P450 monooxygenase; part of the gene cluster that mediates the biosynthesis of 11'-deoxyverticillin A, one of the dimeric epipolythiodioxopiperazines (ETPs) from the verticillin family that act as mycotoxins. 11'-deoxyverticillin A is required for normal conidiation. The nonribosomal peptide synthetase verP is speculated to be responsible for condensation of amino acids to form the carbon skeleton of verticillin, whereas the cluster-specific tailoring enzymes are involved in further modifications leading to the production of 11'-deoxyverticillin A. The protein is Cytochrome P450 monooxygenase verC of Clonostachys rogersoniana.